The following is a 128-amino-acid chain: MGLMWGLFSVIIASAAQLSLGYAASHLPPMTQFWDFIAAFFAFGPGARMLVVGLVGYLLSVFCWYKALHQLALSKAYALLSMSYVLVWIASMVLPGWEGTFSLKALLGVACIMSGLMLIFLPTTKQRY.

A helical membrane pass occupies residues 1 to 21 (MGLMWGLFSVIIASAAQLSLG). Topologically, residues 22–35 (YAASHLPPMTQFWD) are periplasmic. Residues 36–56 (FIAAFFAFGPGARMLVVGLVG) traverse the membrane as a helical segment. Residues 57–76 (YLLSVFCWYKALHQLALSKA) lie on the Cytoplasmic side of the membrane. Residues 77-97 (YALLSMSYVLVWIASMVLPGW) traverse the membrane as a helical segment. Topologically, residues 98 to 100 (EGT) are periplasmic. Residues 101 to 121 (FSLKALLGVACIMSGLMLIFL) form a helical membrane-spanning segment. Residues 122 to 128 (PTTKQRY) are Cytoplasmic-facing.

This sequence belongs to the ArnF family. As to quaternary structure, heterodimer of ArnE and ArnF.

It localises to the cell inner membrane. It participates in bacterial outer membrane biogenesis; lipopolysaccharide biosynthesis. In terms of biological role, translocates 4-amino-4-deoxy-L-arabinose-phosphoundecaprenol (alpha-L-Ara4N-phosphoundecaprenol) from the cytoplasmic to the periplasmic side of the inner membrane. This Escherichia fergusonii (strain ATCC 35469 / DSM 13698 / CCUG 18766 / IAM 14443 / JCM 21226 / LMG 7866 / NBRC 102419 / NCTC 12128 / CDC 0568-73) protein is Probable 4-amino-4-deoxy-L-arabinose-phosphoundecaprenol flippase subunit ArnF.